Consider the following 572-residue polypeptide: Arginine--tRNA ligase (572 aa).

Positions Pro-121–His-131 match the 'HIGH' region motif.

It belongs to the class-I aminoacyl-tRNA synthetase family. Monomer.

Its subcellular location is the cytoplasm. It carries out the reaction tRNA(Arg) + L-arginine + ATP = L-arginyl-tRNA(Arg) + AMP + diphosphate. This Chromobacterium violaceum (strain ATCC 12472 / DSM 30191 / JCM 1249 / CCUG 213 / NBRC 12614 / NCIMB 9131 / NCTC 9757 / MK) protein is Arginine--tRNA ligase.